The following is a 180-amino-acid chain: ATP-dependent protease subunit HslV (180 aa).

Residue Thr-9 is part of the active site. Na(+) contacts are provided by Ala-164, Cys-167, and Thr-170.

This sequence belongs to the peptidase T1B family. HslV subfamily. As to quaternary structure, a double ring-shaped homohexamer of HslV is capped on each side by a ring-shaped HslU homohexamer. The assembly of the HslU/HslV complex is dependent on binding of ATP.

It localises to the cytoplasm. The catalysed reaction is ATP-dependent cleavage of peptide bonds with broad specificity.. With respect to regulation, allosterically activated by HslU binding. Its function is as follows. Protease subunit of a proteasome-like degradation complex believed to be a general protein degrading machinery. The polypeptide is ATP-dependent protease subunit HslV (Leptospira borgpetersenii serovar Hardjo-bovis (strain JB197)).